Reading from the N-terminus, the 421-residue chain is Voltage-dependent calcium channel gamma-8 subunit (421 aa).

4 helical membrane passes run 19–39, 127–147, 157–177, and 207–227; these read VQVL…TIAI, SSIF…CVAA, IILG…IGVI, and FGGL…NIYI. 2 positions are modified to phosphoserine: Ser-251 and Ser-254. The disordered stretch occupies residues 271-304; it reads RRSRSSSRGSSEASPSRDASPGGPGGPGFASTDI. A compositionally biased stretch (low complexity) spans 276 to 287; the sequence is SSRGSSEASPSR. A helical membrane pass occupies residues 318–338; sequence VAAGLASAGGGGGGAGVGAYG. Disordered stretches follow at residues 342 to 363 and 378 to 421; these read GAAG…GFLT and VTVT…TTPV. Positions 384-397 are enriched in pro residues; it reads PAAPAPAPPAPAAP. Residues 408–421 show a composition bias toward polar residues; sequence ASNTNTLNRKTTPV.

The protein belongs to the PMP-22/EMP/MP20 family. CACNG subfamily. As to quaternary structure, interacts with CACNA1C. Identified in a complex with the L-type calcium channel subunits CACNA1C, CACNA2D1 and either CACNB1 or CACNB2. Acts as an auxiliary subunit for AMPA-selective glutamate receptors (AMPARs). Found in a complex with GRIA1, GRIA2, GRIA3, GRIA4, CNIH2, CNIH3, CACNG2, CACNG3, CACNG4, CACNG5 and CACNG7. Interacts with CNIH2. Found in a complex with GRIA1, GRIA2, GRIA3, GRIA4, DLG4 and CNIH2. Palmitoylated. Probably palmitoylated by ZDHHC3 and ZDHHC7.

The protein localises to the cell membrane. Its subcellular location is the postsynaptic density membrane. Regulates the activity of L-type calcium channels that contain CACNA1C as pore-forming subunit. Regulates the trafficking and gating properties of AMPA-selective glutamate receptors (AMPARs). Promotes their targeting to the cell membrane and synapses and modulates their gating properties by slowing their rates of activation, deactivation and desensitization and by mediating their resensitization. Does not show subunit-specific AMPA receptor regulation and regulates all AMPAR subunits. Thought to stabilize the calcium channel in an inactivated (closed) state. The protein is Voltage-dependent calcium channel gamma-8 subunit of Rattus norvegicus (Rat).